Reading from the N-terminus, the 316-residue chain is Glycine--tRNA ligase alpha subunit (316 aa).

It belongs to the class-II aminoacyl-tRNA synthetase family. As to quaternary structure, tetramer of two alpha and two beta subunits.

It is found in the cytoplasm. It carries out the reaction tRNA(Gly) + glycine + ATP = glycyl-tRNA(Gly) + AMP + diphosphate. The polypeptide is Glycine--tRNA ligase alpha subunit (Cupriavidus taiwanensis (strain DSM 17343 / BCRC 17206 / CCUG 44338 / CIP 107171 / LMG 19424 / R1) (Ralstonia taiwanensis (strain LMG 19424))).